Here is a 1313-residue protein sequence, read N- to C-terminus: Restriction of telomere capping protein 1 (1313 aa).

A compositionally biased stretch (polar residues) spans 1 to 17 (MSNYSCPRTHNKSNMSG). Disordered regions lie at residues 1 to 22 (MSNY…NEVK) and 38 to 83 (NSIH…QQLM). Over residues 57–69 (YSFGSINSSNSSY) the composition is skewed to low complexity. Positions 70-83 (DRSRDPSSVEQQLM) are enriched in basic and acidic residues. WD repeat units follow at residues 180–221 (IKLS…NIDN), 229–269 (EHSR…LSGS), 339–378 (AHTG…NDAP), 442–484 (GEEA…NTDR), 711–752 (SQVD…ALST), 795–837 (QHKV…LLWD), 1100–1143 (SPKE…KQLF), and 1190–1229 (LFEI…LIVN). The RING-type; degenerate zinc finger occupies 1267-1309 (CVLCEKPMKKLVMCVLACGHEGHFQCLRDWFLNEGMNECPAGD).

The protein belongs to the WD repeat RTC1 family.

The protein resides in the vacuole. Functionally, may be involved in a process influencing telomere capping. The polypeptide is Restriction of telomere capping protein 1 (RTC1) (Vanderwaltozyma polyspora (strain ATCC 22028 / DSM 70294 / BCRC 21397 / CBS 2163 / NBRC 10782 / NRRL Y-8283 / UCD 57-17) (Kluyveromyces polysporus)).